The following is a 53-amino-acid chain: Large ribosomal subunit protein bL33B (53 aa).

This sequence belongs to the bacterial ribosomal protein bL33 family.

The chain is Large ribosomal subunit protein bL33B from Sorangium cellulosum (strain So ce56) (Polyangium cellulosum (strain So ce56)).